Consider the following 280-residue polypeptide: Dual adapter for phosphotyrosine and 3-phosphotyrosine and 3-phosphoinositide (280 aa).

The disordered stretch occupies residues 1–20 (MGRAELLEGKMSTQDPSDLW). Positions 35–129 (WYHGNLTRHA…GTLMVLKHPY (95 aa)) constitute an SH2 domain. Tyr139 is modified (phosphotyrosine). Residue Ser141 is modified to Phosphoserine. The PH domain maps to 164–259 (LGTKEGYLTK…WIKILRWKLS (96 aa)).

In terms of assembly, interacts with PtdIns(3,4,5)P3 and PLCG2. In vitro, interacts with PtdIns(3,4)P2. Post-translationally, phosphorylated on tyrosine residues. Highly expressed in placenta and lung, followed by brain, heart, kidney, liver, pancreas and skeletal muscle. Expressed by B-lymphocytes, but not T-lymphocytes or nonhematopoietic cells.

It localises to the cytoplasm. Its subcellular location is the membrane. Functionally, may act as a B-cell-associated adapter that regulates B-cell antigen receptor (BCR)-signaling downstream of PI3K. The protein is Dual adapter for phosphotyrosine and 3-phosphotyrosine and 3-phosphoinositide (DAPP1) of Homo sapiens (Human).